The following is a 394-amino-acid chain: Elongation factor Tu (394 aa).

In terms of domain architecture, tr-type G spans 10-204 (KPHVNVGTIG…ALDTYIPEPE (195 aa)). Residues 19-26 (GHVDHGKT) form a G1 region. 19-26 (GHVDHGKT) is a binding site for GTP. Mg(2+) is bound at residue Thr-26. The segment at 60 to 64 (GITIN) is G2. Positions 81-84 (DCPG) are G3. Residues 81–85 (DCPGH) and 136–139 (NKCD) contribute to the GTP site. Positions 136–139 (NKCD) are G4. The tract at residues 174-176 (SAL) is G5.

The protein belongs to the TRAFAC class translation factor GTPase superfamily. Classic translation factor GTPase family. EF-Tu/EF-1A subfamily. In terms of assembly, monomer.

The protein resides in the cytoplasm. The catalysed reaction is GTP + H2O = GDP + phosphate + H(+). Functionally, GTP hydrolase that promotes the GTP-dependent binding of aminoacyl-tRNA to the A-site of ribosomes during protein biosynthesis. The protein is Elongation factor Tu of Vibrio cholerae serotype O1 (strain ATCC 39541 / Classical Ogawa 395 / O395).